The sequence spans 279 residues: Alcohol dehydrogenase-related 31 kDa protein (279 aa).

Position 11 to 34 (11 to 34) interacts with NAD(+); that stretch reads YVADCGGIALETSKVLMTKNIAKL. Serine 139 is a substrate binding site. The Proton acceptor role is filled by tyrosine 152.

The protein belongs to the short-chain dehydrogenases/reductases (SDR) family.

The chain is Alcohol dehydrogenase-related 31 kDa protein (Adhr) from Drosophila subobscura (Fruit fly).